The primary structure comprises 329 residues: MGQLQKAKINQTQKAIVEIKNRFQKYFAKNLNLSRVTAPLFVEGQSGLNDHLDHKQKAVSFYAKKLNKTLEIVQSLAKWKRLALLDYGFSLYEGLYTDMNAIRADDDIDEIHSIYVDQWDWEILINKQDCTLDFLKSIVNKIYSTIKTVQLEIDQLYNPKQIILPDSITFIGSQELEDLYPHLTPSQREYEFAKMHQAIFIYQIGYPLKSGYIQSIRSPEYDNWNLNGDLIVYHKLNDQAIELSSMGIRVSKQDFIKQTNFANLKNDQENNFYHQMILNDQLPQTIGGGIGQSRLCMFLLNKKHIGEVQVSVWPNEYKDELLKKGIKLL.

The protein belongs to the class-II aminoacyl-tRNA synthetase family. AsnA subfamily.

Its subcellular location is the cytoplasm. The enzyme catalyses L-aspartate + NH4(+) + ATP = L-asparagine + AMP + diphosphate + H(+). It functions in the pathway amino-acid biosynthesis; L-asparagine biosynthesis; L-asparagine from L-aspartate (ammonia route): step 1/1. In Ureaplasma urealyticum serovar 10 (strain ATCC 33699 / Western), this protein is Aspartate--ammonia ligase.